The primary structure comprises 643 residues: Protein cueball (643 aa).

The first 21 residues, 1-21 (MMIWVPALIFLSACLLPRSNG), serve as a signal peptide directing secretion. Residues 22 to 530 (TPLEWDFAVT…VCQTPFVWTS (509 aa)) lie on the Extracellular side of the membrane. Asparagine 77 and asparagine 103 each carry an N-linked (GlcNAc...) asparagine glycan. 3 LDL-receptor class B repeats span residues 116–163 (RNLF…DICR), 164–208 (RKLY…DQLS), and 209–254 (DRLF…TNDA). The N-linked (GlcNAc...) asparagine glycan is linked to asparagine 172. Positions 276 to 290 (ATTTVRPEVESSTDG) are enriched in polar residues. Residues 276-303 (ATTTVRPEVESSTDGTESESKQESEPVE) are disordered. Asparagine 312 carries N-linked (GlcNAc...) asparagine glycosylation. 3 EGF-like domains span residues 363-397 (RMDQLERDHCMNGGSYISKRDLCICPAGFKGSRCE), 398-429 (IRECHNYCVHGTCQMSDLAYPKCYCQPGFTGE), and 432-470 (EVSNCAGLCLNGGHCRLGETEKDQPSCECPANFAGERCE). Cystine bridges form between cysteine 372-cysteine 385, cysteine 387-cysteine 396, cysteine 401-cysteine 410, cysteine 405-cysteine 420, cysteine 436-cysteine 446, cysteine 440-cysteine 458, and cysteine 460-cysteine 469. 2 N-linked (GlcNAc...) asparagine glycosylation sites follow: asparagine 472 and asparagine 507. The chain crosses the membrane as a helical span at residues 531-551 (SVIIILVVGIVFSLLLITTII). Over 552 to 643 (HGIRRLYKPK…LIHNMEDDLY (92 aa)) the chain is Cytoplasmic.

Belongs to the cueball family.

Its subcellular location is the cell membrane. Functionally, has a role in spermatogenesis and oogenesis. The polypeptide is Protein cueball (Drosophila ananassae (Fruit fly)).